The chain runs to 214 residues: SNNELTNEERNLLSVAYKNVVGARRSSWRVISSIEQKTEGSERKQQMAKDYREKIEKELKDICHEVLTLLDKFLIPKATTAESKVFYLKMKGDYYRYLAEVATGDERQKVIEESQRAYNDAFDIAKNQMQPTHPIRLGLALNFSVFYYEILNAPDRACHLAKQAFDDAIAELDTLNEDSYKDSTLIMQLLRDNLTLWTSDTGGDDDANAPDEHQ.

It belongs to the 14-3-3 family.

The sequence is that of 14-3-3 protein homolog 2 from Schistosoma mansoni (Blood fluke).